Here is a 208-residue protein sequence, read N- to C-terminus: Exosome complex component CSL4 homolog (208 aa).

As to quaternary structure, component of the RNA exosome complex. Ubiquitously expressed.

The protein resides in the nucleus. Its subcellular location is the nucleolus. It localises to the nucleoplasm. Functionally, non-catalytic component of the RNA exosome complex which has 3'-&gt;5' exoribonuclease activity and participates in a multitude of cellular RNA processing and degradation events. Involved in regulation of antisense ribosomal siRNA production. Involved in response to cold-warm shock. The protein is Exosome complex component CSL4 homolog of Caenorhabditis elegans.